A 126-amino-acid chain; its full sequence is Small ribosomal subunit protein uS13 (126 aa).

The interval 95–126 (GLPVRGQRTQTNARTRKGKKKTVAGKKKAGRK) is disordered. The segment covering 108–126 (RTRKGKKKTVAGKKKAGRK) has biased composition (basic residues).

It belongs to the universal ribosomal protein uS13 family. As to quaternary structure, part of the 30S ribosomal subunit. Forms a loose heterodimer with protein S19. Forms two bridges to the 50S subunit in the 70S ribosome.

In terms of biological role, located at the top of the head of the 30S subunit, it contacts several helices of the 16S rRNA. In the 70S ribosome it contacts the 23S rRNA (bridge B1a) and protein L5 of the 50S subunit (bridge B1b), connecting the 2 subunits; these bridges are implicated in subunit movement. Contacts the tRNAs in the A and P-sites. This chain is Small ribosomal subunit protein uS13, found in Thermobifida fusca (strain YX).